We begin with the raw amino-acid sequence, 118 residues long: Small ribosomal subunit protein uS13 (118 aa).

Residues 94-118 (SLPLRGQRTKTNARTRKGPRKPIRK) form a disordered region.

It belongs to the universal ribosomal protein uS13 family. Part of the 30S ribosomal subunit. Forms a loose heterodimer with protein S19. Forms two bridges to the 50S subunit in the 70S ribosome.

Located at the top of the head of the 30S subunit, it contacts several helices of the 16S rRNA. In the 70S ribosome it contacts the 23S rRNA (bridge B1a) and protein L5 of the 50S subunit (bridge B1b), connecting the 2 subunits; these bridges are implicated in subunit movement. Contacts the tRNAs in the A and P-sites. This is Small ribosomal subunit protein uS13 from Shewanella denitrificans (strain OS217 / ATCC BAA-1090 / DSM 15013).